The chain runs to 840 residues: Heat shock 70 kDa protein 4 (840 aa).

K53 is subject to N6-acetyllysine. Residue S76 is modified to Phosphoserine. 2 positions are modified to phosphotyrosine: Y89 and Y336. Phosphoserine occurs at positions 393 and 415. K430 carries the N6-acetyllysine modification. The tract at residues 500 to 575 (VHKSEENEEP…QAKKAKVKTS (76 aa)) is disordered. Residues 514 to 533 (QNAKEEEKMQVDQEEPHVEE) show a composition bias toward basic and acidic residues. T538 is subject to Phosphothreonine. 2 positions are modified to phosphoserine: S546 and S647. The residue at position 660 (Y660) is a Phosphotyrosine. K679 carries the post-translational modification N6-acetyllysine. The residue at position 756 (S756) is a Phosphoserine. K773 bears the N6-methyllysine mark. Residues 779-840 (CSPIISKPKP…DKKLPEMDID (62 aa)) form a disordered region. Composition is skewed to basic and acidic residues over residues 788-799 (PKVEPPKEEQKN) and 829-840 (DSDKKLPEMDID).

This sequence belongs to the heat shock protein 70 family. Interacts with TJP1/ZO-1.

Its subcellular location is the cytoplasm. The polypeptide is Heat shock 70 kDa protein 4 (HSPA4) (Homo sapiens (Human)).